The following is a 646-amino-acid chain: EF-hand calcium-binding domain-containing protein 6 (646 aa).

EF-hand domains lie at 1–27, 28–63, 109–144, 214–249, 321–356, and 357–392; these read FLET…FDIP, LTPR…NYSP, DCYQ…CGCS, SSQL…FCHK, SHYH…NVQI, and LTDE…ERAA. Phosphothreonine is present on threonine 29. Positions 390–452 are disordered; the sequence is RAATPTATGD…TTAIPGTPPL (63 aa). The segment covering 432-446 has biased composition (polar residues); the sequence is KPQSHPCTAASTTAI. A Phosphoserine modification is found at serine 435. Phosphothreonine occurs at positions 439 and 449. Positions 448 to 646 are interaction with PARK7; that stretch reads GTPPLQNCDP…YNDFLRAFLQ (199 aa). EF-hand domains are found at residues 468-503, 504-539, 579-614, and 615-646; these read GCWR…FNLD, ISKE…LLKA, HCWR…YSIN, and LSEE…AFLQ. The interval 552-646 is interaction with AR; it reads NAHKMKDSGA…YNDFLRAFLQ (95 aa).

As to quaternary structure, microtubule inner protein component of sperm flagellar doublet microtubules. Binds PARK7. Part of a ternary complex containing PARK7, EFCAB6/DJBP and AR.

It is found in the nucleus. The protein resides in the cytoplasm. The protein localises to the cytoskeleton. Its subcellular location is the flagellum axoneme. Its function is as follows. Negatively regulates the androgen receptor by recruiting histone deacetylase complex, and protein DJ-1 antagonizes this inhibition by abrogation of this complex. Microtubule inner protein (MIP) part of the dynein-decorated doublet microtubules (DMTs) in cilia axoneme, which is required for motile cilia beating. This is EF-hand calcium-binding domain-containing protein 6 (EFCAB6) from Macaca fascicularis (Crab-eating macaque).